The primary structure comprises 314 residues: Mitochondrial 2-oxoglutarate/malate carrier protein (314 aa).

Ala-2 is subject to N-acetylalanine. Residue Ser-6 is modified to Phosphoserine. 3 Solcar repeats span residues 23–108 (VKFL…LFER), 117–208 (PGFL…SKQF), and 217–306 (DNIL…MNKA). A helical membrane pass occupies residues 24-42 (KFLFGGLAGMGATVFVQPL). Residue Lys-57 is modified to N6-succinyllysine. The helical transmembrane segment at 83–101 (GLSAGLLRQATYTTTRLGI) threads the bilayer. Phosphotyrosine is present on Tyr-102. 3 helical membrane passes run 119 to 140 (FLLK…GTPA), 183 to 202 (GCIP…LASY), and 222 to 240 (HFCA…SMPV). Position 256 is an N6-acetyllysine (Lys-256). The helical transmembrane segment at 281–300 (GFTPYYARLGPHTVLTFIFL) threads the bilayer.

Belongs to the mitochondrial carrier (TC 2.A.29) family. Interacts with SMIM26. Post-translationally, the N-terminus is blocked. In terms of tissue distribution, heart, liver and brain.

It localises to the mitochondrion inner membrane. It catalyses the reaction (S)-malate(in) + 2-oxoglutarate(out) = (S)-malate(out) + 2-oxoglutarate(in). The enzyme catalyses malonate(in) + 2-oxoglutarate(out) = malonate(out) + 2-oxoglutarate(in). The catalysed reaction is succinate(in) + 2-oxoglutarate(out) = succinate(out) + 2-oxoglutarate(in). It carries out the reaction maleate(in) + 2-oxoglutarate(out) = maleate(out) + 2-oxoglutarate(in). It catalyses the reaction oxaloacetate(in) + 2-oxoglutarate(out) = oxaloacetate(out) + 2-oxoglutarate(in). Functionally, catalyzes the transport of 2-oxoglutarate (alpha-oxoglutarate) across the inner mitochondrial membrane in an electroneutral exchange for malate. Can also exchange 2-oxoglutarate for other dicarboxylic acids such as malonate, succinate, maleate and oxaloacetate, although with lower affinity. Contributes to several metabolic processes, including the malate-aspartate shuttle, the oxoglutarate/isocitrate shuttle, in gluconeogenesis from lactate, and in nitrogen metabolism. Maintains mitochondrial fusion and fission events, and the organization and morphology of cristae. Involved in the regulation of apoptosis. Helps protect from cytotoxic-induced apoptosis by modulating glutathione levels in mitochondria. The chain is Mitochondrial 2-oxoglutarate/malate carrier protein (SLC25A11) from Bos taurus (Bovine).